Reading from the N-terminus, the 221-residue chain is uncharacterized protein (221 aa).

The disordered stretch occupies residues 1–22 (MGLDNFTAPSTGTTPAGSPFLR). The span at 7-16 (TAPSTGTTPA) shows a compositional bias: polar residues.

The protein belongs to the IIV-6 259R family.

This is an uncharacterized protein from Invertebrate iridescent virus 3 (IIV-3).